Consider the following 133-residue polypeptide: ATP synthase epsilon chain, chloroplastic (133 aa).

Belongs to the ATPase epsilon chain family. As to quaternary structure, F-type ATPases have 2 components, CF(1) - the catalytic core - and CF(0) - the membrane proton channel. CF(1) has five subunits: alpha(3), beta(3), gamma(1), delta(1), epsilon(1). CF(0) has three main subunits: a, b and c.

The protein resides in the plastid. It is found in the chloroplast thylakoid membrane. Functionally, produces ATP from ADP in the presence of a proton gradient across the membrane. This chain is ATP synthase epsilon chain, chloroplastic, found in Thalassiosira pseudonana (Marine diatom).